We begin with the raw amino-acid sequence, 131 residues long: Holo-[acyl-carrier-protein] synthase (131 aa).

Mg(2+) is bound by residues D8 and E59.

The protein belongs to the P-Pant transferase superfamily. AcpS family. Mg(2+) serves as cofactor.

The protein resides in the cytoplasm. It catalyses the reaction apo-[ACP] + CoA = holo-[ACP] + adenosine 3',5'-bisphosphate + H(+). Transfers the 4'-phosphopantetheine moiety from coenzyme A to a Ser of acyl-carrier-protein. The protein is Holo-[acyl-carrier-protein] synthase of Orientia tsutsugamushi (strain Boryong) (Rickettsia tsutsugamushi).